Here is a 54-residue protein sequence, read N- to C-terminus: Salt stress-induced hydrophobic peptide ESI3 (54 aa).

The next 2 membrane-spanning stretches (helical) occupy residues 2-22 (GSAT…GVFL) and 34-54 (LLLT…VLVV).

It belongs to the UPF0057 (PMP3) family.

The protein resides in the membrane. This Thinopyrum elongatum (Tall wheatgrass) protein is Salt stress-induced hydrophobic peptide ESI3 (ESI3).